The primary structure comprises 165 residues: Transcriptional repressor NrdR (165 aa).

A zinc finger spans residues cysteine 3–cysteine 34. An ATP-cone domain is found at proline 49–glutamine 139.

This sequence belongs to the NrdR family. The cofactor is Zn(2+).

Negatively regulates transcription of bacterial ribonucleotide reductase nrd genes and operons by binding to NrdR-boxes. The chain is Transcriptional repressor NrdR from Methylococcus capsulatus (strain ATCC 33009 / NCIMB 11132 / Bath).